Reading from the N-terminus, the 216-residue chain is Cytochrome c biogenesis ATP-binding export protein CcmA (216 aa).

The ABC transporter domain maps to 2 to 215; that stretch reads LSVEELSCVR…SNHLRKIKLG (214 aa). 34 to 41 is an ATP binding site; it reads GHNGAGKT.

The protein belongs to the ABC transporter superfamily. CcmA exporter (TC 3.A.1.107) family. As to quaternary structure, the complex is composed of two ATP-binding proteins (CcmA) and two transmembrane proteins (CcmB).

The protein localises to the cell inner membrane. It carries out the reaction heme b(in) + ATP + H2O = heme b(out) + ADP + phosphate + H(+). Its function is as follows. Part of the ABC transporter complex CcmAB involved in the biogenesis of c-type cytochromes; once thought to export heme, this seems not to be the case, but its exact role is uncertain. Responsible for energy coupling to the transport system. In Photobacterium profundum (strain SS9), this protein is Cytochrome c biogenesis ATP-binding export protein CcmA.